A 323-amino-acid polypeptide reads, in one-letter code: Sphingolipid delta(4)-desaturase DES1 (323 aa).

A run of 2 helical transmembrane segments spans residues 41 to 61 (YNLIWVVMLMVAAQLTAFYLV) and 68 to 88 (WVVFWAYVFGSCISHSMTLAI). The short motif at 89-93 (HEISH) is the Histidine box-1 element. Residues 102-122 (AMWNRWFGIFANLPLGLPYSI) traverse the membrane as a helical segment. Residues 128-132 (HMDHH) carry the Histidine box-2 motif. 3 helical membrane passes run 159 to 179 (KFIWIVLQPFFYAIRPLCINP), 185 to 205 (LEIINLLAQLFFDIVIYYLWG), and 209 to 229 (IFYMLAGSVLGLGLHPISGHF). The short motif at 259 to 263 (HNEHH) is the Histidine box-3 element.

It belongs to the fatty acid desaturase type 1 family. DEGS subfamily. Interacts with RLBP1; the interaction increases synthesis of chromophore-precursors by DEGS1. In terms of tissue distribution, expressed in retina and retinal pigment epithelium by Mueller cells (at protein level).

The protein resides in the endoplasmic reticulum membrane. The enzyme catalyses an N-acylsphinganine + 2 Fe(II)-[cytochrome b5] + O2 + 2 H(+) = an N-acylsphing-4-enine + 2 Fe(III)-[cytochrome b5] + 2 H2O. It carries out the reaction all-trans-retinol = 11-cis-retinol. The catalysed reaction is all-trans-retinol = 9-cis-retinol. It catalyses the reaction all-trans-retinol = 13-cis-retinol. The enzyme catalyses 11-cis-retinol = 13-cis-retinol. It carries out the reaction 11-cis-retinol = 9-cis-retinol. In terms of biological role, has sphingolipid-delta-4-desaturase activity. Converts D-erythro-sphinganine to D-erythro-sphingosine (E-sphing-4-enine). Catalyzes the equilibrium isomerization of retinols. The sequence is that of Sphingolipid delta(4)-desaturase DES1 (DEGS1) from Gallus gallus (Chicken).